The chain runs to 414 residues: Inositol-tetrakisphosphate 1-kinase (414 aa).

1D-myo-inositol 1,3,4-trisphosphate is bound at residue K18. Positions 106 and 157 each coordinate ATP. An ATP-grasp domain is found at 117–325 (EAYMEDDRIC…IATVLQGQST (209 aa)). Residues H167 and K199 each contribute to the 1D-myo-inositol 1,3,4-trisphosphate site. ATP is bound by residues 188 to 199 (QNFINHNAVLYK), S214, S232, and S236. The Mg(2+) site is built by D281, D295, and N297. N297 is a 1D-myo-inositol 1,3,4-trisphosphate binding site. Residues K340 and K383 each carry the N6-acetyllysine; by EP300 and CREBBP modification. Phosphoserine is present on S396. N6-acetyllysine; by EP300 and CREBBP is present on K410.

This sequence belongs to the ITPK1 family. In terms of assembly, monomer. Interacts with GPS1/COPS1. The cofactor is Mg(2+). Acetylation by EP300 and CREBBP destabilizes ITPK1, and down-regulates enzymatic activity. Deacetylated by SIRT1. In terms of tissue distribution, expressed in brain &gt; heart &gt; skeletal muscle = kidney = pancreas = liver = placenta &gt; lung. In brain, it is expressed in cerebellum, cerebral cortex, medulla, spinal cord, occipital lobe, frontal lobe, temporal lobe and putamen.

It catalyses the reaction 1D-myo-inositol 3,4,5,6-tetrakisphosphate + ATP = 1D-myo-inositol 1,3,4,5,6-pentakisphosphate + ADP + H(+). The catalysed reaction is 1D-myo-inositol 1,3,4-trisphosphate + ATP = 1D-myo-inositol 1,3,4,5-tetrakisphosphate + ADP + H(+). It carries out the reaction 1D-myo-inositol 1,3,4-trisphosphate + ATP = 1D-myo-inositol 1,3,4,6-tetrakisphosphate + ADP + H(+). The enzyme catalyses 1D-myo-inositol 3,4,6-trisphosphate + ATP = 1D-myo-inositol 1,3,4,6-tetrakisphosphate + ADP + H(+). It catalyses the reaction 1D-myo-inositol 1,3,4-trisphosphate + 1D-myo-inositol 1,3,4,5,6-pentakisphosphate = 1D-myo-inositol 3,4,5,6-tetrakisphosphate + 1D-myo-inositol 1,3,4,6-tetrakisphosphate. The catalysed reaction is 1D-myo-inositol 1,3,4-trisphosphate + 1D-myo-inositol 1,3,4,5,6-pentakisphosphate = 1D-myo-inositol 3,4,5,6-tetrakisphosphate + 1D-myo-inositol 1,3,4,5-tetrakisphosphate. Its function is as follows. Kinase that can phosphorylate various inositol polyphosphate such as Ins(3,4,5,6)P4 or Ins(1,3,4)P3. Phosphorylates Ins(3,4,5,6)P4 at position 1 to form Ins(1,3,4,5,6)P5. This reaction is thought to have regulatory importance, since Ins(3,4,5,6)P4 is an inhibitor of plasma membrane Ca(2+)-activated Cl(-) channels, while Ins(1,3,4,5,6)P5 is not. Also phosphorylates Ins(1,3,4)P3 on O-5 and O-6 to form Ins(1,3,4,6)P4, an essential molecule in the hexakisphosphate (InsP6) pathway. Also acts as an inositol polyphosphate phosphatase that dephosphorylates Ins(1,3,4,5)P4 and Ins(1,3,4,6)P4 to Ins(1,3,4)P3, and Ins(1,3,4,5,6)P5 to Ins(3,4,5,6)P4. May also act as an isomerase that interconverts the inositol tetrakisphosphate isomers Ins(1,3,4,5)P4 and Ins(1,3,4,6)P4 in the presence of ADP and magnesium. Probably acts as the rate-limiting enzyme of the InsP6 pathway. Modifies TNF-alpha-induced apoptosis by interfering with the activation of TNFRSF1A-associated death domain. Plays an important role in MLKL-mediated necroptosis. Produces highly phosphorylated inositol phosphates such as inositolhexakisphosphate (InsP6) which bind to MLKL mediating the release of an N-terminal auto-inhibitory region leading to its activation. Essential for activated phospho-MLKL to oligomerize and localize to the cell membrane during necroptosis. This Homo sapiens (Human) protein is Inositol-tetrakisphosphate 1-kinase.